The sequence spans 277 residues: 3-methyl-2-oxobutanoate hydroxymethyltransferase (277 aa).

Residues D58 and D97 each contribute to the Mg(2+) site. Residues 58 to 59 (DS), D97, and K127 each bind 3-methyl-2-oxobutanoate. Position 129 (E129) interacts with Mg(2+). The Proton acceptor role is filled by E195.

This sequence belongs to the PanB family. In terms of assembly, homodecamer; pentamer of dimers. It depends on Mg(2+) as a cofactor.

The protein resides in the cytoplasm. It catalyses the reaction 3-methyl-2-oxobutanoate + (6R)-5,10-methylene-5,6,7,8-tetrahydrofolate + H2O = 2-dehydropantoate + (6S)-5,6,7,8-tetrahydrofolate. It functions in the pathway cofactor biosynthesis; (R)-pantothenate biosynthesis; (R)-pantoate from 3-methyl-2-oxobutanoate: step 1/2. In terms of biological role, catalyzes the reversible reaction in which hydroxymethyl group from 5,10-methylenetetrahydrofolate is transferred onto alpha-ketoisovalerate to form ketopantoate. This Leifsonia xyli subsp. xyli (strain CTCB07) protein is 3-methyl-2-oxobutanoate hydroxymethyltransferase.